A 456-amino-acid polypeptide reads, in one-letter code: Chromosomal replication initiator protein DnaA (456 aa).

Residues 1 to 73 form a domain I, interacts with DnaA modulators region; the sequence is MEIYLDNLWD…ADVVHDILGY (73 aa). Residues 73–117 are domain II; the sequence is YPVEIYLTTFLVEDSRKNDSGLIWSEHKSVNILGENLSIPKPLPA. The interval 118 to 334 is domain III, AAA+ region; the sequence is NLNAKYMFSR…GALTRVVTYI (217 aa). Gly162, Gly164, Lys165, and Thr166 together coordinate ATP. Residues 335-456 are domain IV, binds dsDNA; sequence SISGLPMTVE…SDRINFSSRH (122 aa).

This sequence belongs to the DnaA family. Oligomerizes as a right-handed, spiral filament on DNA at oriC.

The protein resides in the cytoplasm. In terms of biological role, plays an essential role in the initiation and regulation of chromosomal replication. ATP-DnaA binds to the origin of replication (oriC) to initiate formation of the DNA replication initiation complex once per cell cycle. Binds the DnaA box (a 9 base pair repeat at the origin) and separates the double-stranded (ds)DNA. Forms a right-handed helical filament on oriC DNA; dsDNA binds to the exterior of the filament while single-stranded (ss)DNA is stabiized in the filament's interior. The ATP-DnaA-oriC complex binds and stabilizes one strand of the AT-rich DNA unwinding element (DUE), permitting loading of DNA polymerase. After initiation quickly degrades to an ADP-DnaA complex that is not apt for DNA replication. Binds acidic phospholipids. The sequence is that of Chromosomal replication initiator protein DnaA from Trichodesmium erythraeum (strain IMS101).